The sequence spans 313 residues: Olfactory receptor 1f45 (313 aa).

Topologically, residues 1-25 (MSSTNQSSVTEFLLLGLSRQPQQQQ) are extracellular. Asn-5 is a glycosylation site (N-linked (GlcNAc...) asparagine). The helical transmembrane segment at 26–50 (LLFLLFLIMYLATVLGNLLIILAIG) threads the bilayer. Residues 51-57 (TDSRLHT) lie on the Cytoplasmic side of the membrane. Residues 58 to 79 (PMYFFLSNLSFVDVCFSSTTVP) form a helical membrane-spanning segment. Over 80-100 (KVLANHILGSQAISFSGCLTQ) the chain is Extracellular. Residues Cys-97 and Cys-189 are joined by a disulfide bond. The helical transmembrane segment at 101 to 120 (LYFLAVFGNMDNFLLAVMSY) threads the bilayer. Topologically, residues 121-139 (DRFVAICHPLHYTTKMTRQ) are cytoplasmic. The helical transmembrane segment at 140–158 (LCVLLVVGSWVVANMNCLL) threads the bilayer. The Extracellular segment spans residues 159–196 (HILLMARLSFCADNMIPHFFCDGTPLLKLSCSDTHLNE). A helical transmembrane segment spans residues 197 to 219 (LMILTEGAVVMVTPFVCILISYI). The Cytoplasmic portion of the chain corresponds to 220 to 236 (HITCAVLRVSSPRGGWK). The chain crosses the membrane as a helical span at residues 237 to 260 (SFSTCGSHLAVVCLFYGTVIAVYF). Over 261 to 272 (NPSSSHLAGRDM) the chain is Extracellular. A helical membrane pass occupies residues 273–292 (AAAVMYAVVTPMLNPFIYSL). Over 293 to 313 (RNSDMKAALRKVLAMRFPSKQ) the chain is Cytoplasmic.

Belongs to the G-protein coupled receptor 1 family. As to expression, olfactory epithelium.

Its subcellular location is the cell membrane. Odorant receptor. The polypeptide is Olfactory receptor 1f45 (Or1f45) (Rattus norvegicus (Rat)).